The following is a 461-amino-acid chain: Glucan endo-1,3-beta-glucosidase (461 aa).

The N-terminal stretch at 1 to 23 is a signal peptide; that stretch reads MPLLILLMLLAAGAAGAESATPS. E123 acts as the Proton donor in catalysis. The active-site Nucleophile is the E265. The disordered stretch occupies residues 350–375; it reads GASVAPTPSPNPSPNPSPKPAPSGGG. Residues 356 to 370 show a composition bias toward pro residues; the sequence is TPSPNPSPNPSPKPA. Cysteines 378 and 439 form a disulfide.

The protein belongs to the glycosyl hydrolase 17 family. In terms of processing, contains two additional disulfide bonds.

The enzyme catalyses Hydrolysis of (1-&gt;3)-beta-D-glucosidic linkages in (1-&gt;3)-beta-D-glucans.. Functionally, is thought to be an important plant defense-related product against fungal pathogens. The protein is Glucan endo-1,3-beta-glucosidase (GLC1) of Triticum aestivum (Wheat).